Consider the following 214-residue polypeptide: UPF0502 protein Pput_3252 (214 aa).

It belongs to the UPF0502 family.

The sequence is that of UPF0502 protein Pput_3252 from Pseudomonas putida (strain ATCC 700007 / DSM 6899 / JCM 31910 / BCRC 17059 / LMG 24140 / F1).